A 103-amino-acid chain; its full sequence is Large ribosomal subunit protein bL21 (103 aa).

The protein belongs to the bacterial ribosomal protein bL21 family. In terms of assembly, part of the 50S ribosomal subunit. Contacts protein L20.

Its function is as follows. This protein binds to 23S rRNA in the presence of protein L20. The protein is Large ribosomal subunit protein bL21 of Salmonella paratyphi A (strain ATCC 9150 / SARB42).